The following is a 231-amino-acid chain: NADH-ubiquinone oxidoreductase chain 4 (231 aa).

The next 7 membrane-spanning stretches (helical) occupy residues 1–21, 34–54, 61–80, 84–106, 128–148, 156–176, and 211–231; these read PIAG…YGII, VFLP…LTCL, SLIA…AIII, WGLS…LFCL, ILPM…ATPP, LLII…LGLS, and LLMI…ELVI.

Belongs to the complex I subunit 4 family.

It is found in the mitochondrion membrane. The catalysed reaction is a ubiquinone + NADH + 5 H(+)(in) = a ubiquinol + NAD(+) + 4 H(+)(out). Functionally, core subunit of the mitochondrial membrane respiratory chain NADH dehydrogenase (Complex I) that is believed to belong to the minimal assembly required for catalysis. Complex I functions in the transfer of electrons from NADH to the respiratory chain. The immediate electron acceptor for the enzyme is believed to be ubiquinone. The sequence is that of NADH-ubiquinone oxidoreductase chain 4 (MT-ND4) from Tropidolaemus wagleri (Wagler's pit viper).